Here is a 451-residue protein sequence, read N- to C-terminus: Cysteine desulfurase (451 aa).

5 residues coordinate pyridoxal 5'-phosphate: alanine 121, threonine 122, glutamine 229, serine 249, and histidine 251. An N6-(pyridoxal phosphate)lysine modification is found at lysine 252. Threonine 289 lines the pyridoxal 5'-phosphate pocket. The active-site Cysteine persulfide intermediate is cysteine 375. Position 375 (cysteine 375) interacts with [2Fe-2S] cluster. Cysteine 375 contributes to the Zn(2+) binding site. A Cysteine persulfide modification is found at cysteine 375.

The protein belongs to the class-V pyridoxal-phosphate-dependent aminotransferase family. NifS/IscS subfamily. Homodimer. Component of the mitochondrial core iron-sulfur cluster (ISC) complex composed of NFS1, LYRM4, NDUFAB1, ISCU, FXN, and FDX2; this complex is a heterohexamer containing two copies of each monomer. Component of cyteine desulfurase complex composed of NFS1, LYRM4 and NDUFAB1; this complex contributes to the activation of cysteine desulfurase activity and NFS1 stabilization. Interacts (homodimer form) with ISCU (D-state); each monomer interacts with the C-terminal regions of each NFS1 monomer. Interacts with HSPA9. Interacts (via homodimer form) with FDX2. Interacts (via homodimer form) with FXN. Interacts with LYRM4. Component of a complex composed of FXN, NFS1, LYRM4 and ISCU. In terms of assembly, monomer. Homodimer. Oligomer. Interacts with ISCU. Component of the cysteine desulfurase complex composed of NFS1 and LYRM4; this complex contributes to the activation of cysteine desulfurase activity. Interacts with MOCS3. Pyridoxal 5'-phosphate is required as a cofactor. N-gluconoylated. In terms of processing, cysteine persulfide intermediate is reduced by thiol-containing molecules like glutathione and L-cysteine. Persulfide reduction is a rate-limiting step of cysteine desulfurase catalytic cycle.

The protein resides in the mitochondrion. The protein localises to the cytoplasm. Its subcellular location is the nucleus. It localises to the cytoskeleton. It is found in the microtubule organizing center. The protein resides in the centrosome. The enzyme catalyses (sulfur carrier)-H + L-cysteine = (sulfur carrier)-SH + L-alanine. It catalyses the reaction L-cysteinyl-[cysteine desulfurase] + L-cysteine = S-sulfanyl-L-cysteinyl-[cysteine desulfurase] + L-alanine. Active only in complex with LYRM4. Functionally, cysteine desulfurase, of the core iron-sulfur cluster (ISC) assembly complex, that catalyzes the desulfuration of L-cysteine to L-alanine, as component of the cysteine desulfurase complex leading to the formation of a cysteine persulfide intermediate at the active site cysteine residue and participates in the [2Fe-2S] clusters assembly on the scaffolding protein ISCU. The persulfide is then transferred on the flexible Cys loop from the catalytic site of NFS1 to the surface of NFS1. After the NFS1-linked persulfide sulfur is transferred to one of the conserved Cys residues of the scaffold, a reaction assisted by FXN. The core iron-sulfur cluster (ISC) assembly complex is involved in the de novo synthesis of a [2Fe-2S] cluster, the first step of the mitochondrial iron-sulfur protein biogenesis. This process is initiated by the cysteine desulfurase complex (NFS1:LYRM4:NDUFAB1) that produces persulfide which is delivered on the scaffold protein ISCU in a FXN-dependent manner. Then this complex is stabilized by FDX2 which provides reducing equivalents to accomplish the [2Fe-2S] cluster assembly. Finally, the [2Fe-2S] cluster is transferred from ISCU to chaperone proteins, including HSCB, HSPA9 and GLRX5. In terms of biological role, may catalyze the desulfuration of L-cysteine to L-alanine as component of the cysteine desulfurase complex (NFS1:LYRM4), leading to the formation of a cysteine persulfide intermediate. Acts as a sulfur donor for MOCS3 by transferring the sulfur of the cysteine persulfide intermediate on MOCS3. The polypeptide is Cysteine desulfurase (Rattus norvegicus (Rat)).